The chain runs to 1726 residues: Protein NLRC5 (1726 aa).

An NACHT domain is found at 207 to 537 (RVVMLSGQAG…THLTIQEFMA (331 aa)). 213-220 (GQAGSGKT) is a binding site for ATP. 18 LRR repeats span residues 879–902 (LTVLNLSHNALGNRGLKKLLEHLP), 904–925 (LDTIQEINVSDNGVDMDGVVLL), 1002–1025 (NLDFSHGTLKDESTEKLLKFLPNM), 1026–1048 (ASLNLLNLSHIQMSTDSALLLVQ), 1103–1126 (CHHLTDLDLSSNFLKDEDVKTFVQ), 1128–1155 (LPKLQISGSVSLNNNNLTEVGVLYLLSL), 1212–1235 (LNSVQTLELRNNSFSADTIKYLIT), 1351–1374 (AEFLSSVLPSLKNLKILSLSSKGE), 1387–1411 (AQKHLEQLSLAHHVIKDRGAAVLGN), 1421–1443 (SLSLLKCLDWTATGGRDLVRGLV), 1447–1468 (SLEEIRLDSIELDEESIDCFAQ), 1502–1525 (LIELEEIELIGLRMGDRGVEELVK), 1532–1553 (RLRKINLSENRVSDHAGEMLVK), 1560–1580 (ALQQIHLFRNNLGHSSAAVLG), 1588–1609 (ELTELDLSENQMESKGCSSVCE), 1616–1637 (ALKKLHLTSIGTSDLVNVASCL), 1642–1662 (SIEDISLSWNNCENDVVLKLA), and 1670–1691 (KLKRLDLEANNINTSGAMALAT).

The protein belongs to the NLRP family.

It localises to the cytoplasm. In terms of biological role, probable regulator of the NF-kappa-B and type I interferon signaling pathways. May also regulate the type II interferon signaling pathway. Plays a role in homeostatic control of innate immunity and in antiviral defense mechanisms. This chain is Protein NLRC5 (nlrc5), found in Ictalurus punctatus (Channel catfish).